The primary structure comprises 317 residues: MVKETVTVAKTCSHCGHNGHNARTCLNGVNKASVKLFGVNISSDPIRPPEVTALRKSLSLGNLDALLANDESNGSGDPIAAVDDTGYHSDGQIHSKKGKTAHEKKKGKPWTEEEHRNFLIGLNKLGKGDWRGIAKSFVSTRTPTQVASHAQKYFIRLNVNDKRKRRASLFDISLEDQKEKERNSQDASTKTPPKQPITGIQQPVVQGHTQTEISNRFQNLSMEYMPIYQPIPPYYNFPPIMYHPNYPMYYANPQVPVRFVHPSGIPVPRHIPIGLPLSQPSEASNMTNKDGLDLHIGLPPQATGASDLTGHGVIHVK.

Residues 12–25 form a CCHC-type zinc finger; it reads CSHCGHNGHNARTC. Residues 77–111 form a disordered region; the sequence is DPIAAVDDTGYHSDGQIHSKKGKTAHEKKKGKPWT. Residues 94-108 show a composition bias toward basic residues; the sequence is HSKKGKTAHEKKKGK. The region spanning 102–158 is the HTH myb-type domain; sequence HEKKKGKPWTEEEHRNFLIGLNKLGKGDWRGIAKSFVSTRTPTQVASHAQKYFIRLN. A DNA-binding region (H-T-H motif) is located at residues 130-154; sequence WRGIAKSFVSTRTPTQVASHAQKYF. The interval 173-206 is disordered; the sequence is SLEDQKEKERNSQDASTKTPPKQPITGIQQPVVQ. Basic and acidic residues predominate over residues 175 to 184; the sequence is EDQKEKERNS. The segment covering 185–206 has biased composition (polar residues); sequence QDASTKTPPKQPITGIQQPVVQ.

The protein localises to the nucleus. Its function is as follows. Probable transcription factor involved in somatic embryogenesis. Acts as a positive regulator of BHLH109. This is Probable transcription factor At5g61620 from Arabidopsis thaliana (Mouse-ear cress).